Here is a 381-residue protein sequence, read N- to C-terminus: G-protein coupled receptor homolog Q2/3L (381 aa).

At 1–91 (MNYTLSTVSS…HCDDGVDTTS (91 aa)) the chain is on the extracellular side. N-linked (GlcNAc...) asparagine; by host glycosylation is found at Asn2, Asn15, Asn19, Asn41, Asn50, Asn56, and Asn62. Residues 92 to 112 (FGLITLYSTIFFLGLFGNIIV) traverse the membrane as a helical segment. Residues 113–126 (LTVLRKYKIKTIQD) lie on the Cytoplasmic side of the membrane. A helical membrane pass occupies residues 127 to 147 (MFLLNLTLSDLIFVLVFPFNL). Residues 148 to 165 (YDSIAKQWSLGDCLCKFK) lie on the Extracellular side of the membrane. The chain crosses the membrane as a helical span at residues 166 to 186 (AMFYFVGFYNSMSFITLMSID). The Cytoplasmic segment spans residues 187-206 (RYLAVVHPVKSMPIRTKRYG). Residues 207–227 (IVLSMVVWIVSTIESFPIMLF) form a helical membrane-spanning segment. The Extracellular segment spans residues 228-251 (YETKKVYGITYCHVFYNDNAKIWK). A helical transmembrane segment spans residues 252–272 (LFINFEINIFGMIIPLTILLY). Over 273–294 (CYYKILNTLKTSQTKNKKAIKM) the chain is Cytoplasmic. A helical transmembrane segment spans residues 295–315 (VFLIVICSVLFLLPFSVTVFV). Over 316–336 (SSLYLLNVFSGCMALRFVNLA) the chain is Extracellular. The chain crosses the membrane as a helical span at residues 337–357 (VHVAEIVSLCHCFINPLIYAF). Residues 358 to 381 (CSREFTKKLLRLRTTSSAGSISIG) are Cytoplasmic-facing.

This sequence belongs to the G-protein coupled receptor 1 family.

The protein resides in the host cell membrane. Functionally, putative chemokine receptor. This chain is G-protein coupled receptor homolog Q2/3L, found in Ovis aries (Sheep).